The following is a 164-amino-acid chain: Small ribosomal subunit protein uS5 (164 aa).

An S5 DRBM domain is found at Leu10–Val73.

The protein belongs to the universal ribosomal protein uS5 family. As to quaternary structure, part of the 30S ribosomal subunit. Contacts proteins S4 and S8.

Functionally, with S4 and S12 plays an important role in translational accuracy. Located at the back of the 30S subunit body where it stabilizes the conformation of the head with respect to the body. The protein is Small ribosomal subunit protein uS5 of Streptococcus gordonii (strain Challis / ATCC 35105 / BCRC 15272 / CH1 / DL1 / V288).